Consider the following 429-residue polypeptide: Glutamate-1-semialdehyde 2,1-aminomutase (429 aa).

Lys-265 carries the N6-(pyridoxal phosphate)lysine modification.

The protein belongs to the class-III pyridoxal-phosphate-dependent aminotransferase family. HemL subfamily. In terms of assembly, homodimer. Pyridoxal 5'-phosphate serves as cofactor.

It localises to the cytoplasm. The catalysed reaction is (S)-4-amino-5-oxopentanoate = 5-aminolevulinate. It participates in porphyrin-containing compound metabolism; protoporphyrin-IX biosynthesis; 5-aminolevulinate from L-glutamyl-tRNA(Glu): step 2/2. The sequence is that of Glutamate-1-semialdehyde 2,1-aminomutase from Legionella pneumophila (strain Corby).